Consider the following 260-residue polypeptide: 3'-5' ssDNA/RNA exonuclease TatD (260 aa).

A divalent metal cation contacts are provided by glutamate 92, histidine 128, and histidine 153.

Belongs to the metallo-dependent hydrolases superfamily. TatD-type hydrolase family. TatD subfamily. Monomer. The cofactor is Mg(2+).

It is found in the cytoplasm. 3'-5' exonuclease that prefers single-stranded DNA and RNA. May play a role in the H(2)O(2)-induced DNA damage repair. The sequence is that of 3'-5' ssDNA/RNA exonuclease TatD from Pantoea sp. (strain At-9b).